Consider the following 2581-residue polypeptide: Chromodomain-helicase-DNA-binding protein 8 (2581 aa).

Disordered stretches follow at residues 22 to 114, 253 to 281, and 349 to 375; these read DDSF…QTST, VKGS…TPAQ, and QKIQ…PLTL. Composition is skewed to polar residues over residues 42 to 64 and 94 to 114; these read SLDS…SSAS and DYTT…QTST. A compositionally biased stretch (low complexity) spans 255-267; that stretch reads GSAPAGNPGATGP. Residues 355 to 370 are compositionally biased toward pro residues; sequence PQPPSSQPQPQPPPSA. Ser432 carries the phosphoserine modification. 2 disordered regions span residues 473–584 and 596–616; these read RARG…KRKK and DEEE…ILPE. Residues 493–516 show a composition bias toward basic and acidic residues; it reads RPEEEGEKKRRKKSSGERLKEEKP. 2 positions are modified to phosphoserine: Ser553 and Ser562. The span at 572–584 shows a compositional bias: basic residues; sequence QKRRSNRQVKRKK. Lys609 is covalently cross-linked (Glycyl lysine isopeptide (Lys-Gly) (interchain with G-Cter in SUMO)). Chromo domains lie at 642-709 and 724-790; these read AIVD…AQMR and VEVD…RVNR. Residues 823 to 997 form the Helicase ATP-binding domain; sequence LFNWYNRQNC…FSLLHFLEPS (175 aa). ATP is bound at residue 836 to 843; it reads DEMGLGKT. The DEAH box motif lies at 948–951; that stretch reads DEAH. The region spanning 1137-1288 is the Helicase C-terminal domain; it reads LIDKLLPKLK…KAVLQSMSGR (152 aa). 2 positions are modified to phosphoserine: Ser1420 and Ser1424. Residues 1692-1713 are disordered; sequence EDPEYKPLQGPPKDPDDEGDPL. Positions 1789-2302 are interaction with FAM124B; that stretch reads IARREKQQRW…LVELEVECME (514 aa). Residues Ser1976 and Ser1978 each carry the phosphoserine modification. Residues 1988–2016 form a disordered region; sequence QCTSRTASPSPLRPDVPAEKSPEENAVQV. A Phosphothreonine modification is found at Thr1993. Ser1995, Ser1997, and Ser2008 each carry phosphoserine. Lys2025 is covalently cross-linked (Glycyl lysine isopeptide (Lys-Gly) (interchain with G-Cter in SUMO2)). 2 disordered regions span residues 2047–2118 and 2179–2221; these read SSDT…YDEE and NRRS…SSSA. The span at 2063–2072 shows a compositional bias: acidic residues; the sequence is EDDDDSDSEL. Residues Ser2068 and Ser2070 each carry the phosphoserine modification. Over residues 2075-2094 the composition is skewed to low complexity; sequence SKLSPSSSSSSSSSSSSSSS. The segment covering 2102 to 2116 has biased composition (basic and acidic residues); the sequence is EEKLTADRSRPKLYD. Residues Ser2182, Ser2200, and Ser2202 each carry the phosphoserine modification. At Thr2204 the chain carries Phosphothreonine. Ser2211 is modified (phosphoserine). The residue at position 2215 (Thr2215) is a Phosphothreonine. A Phosphoserine modification is found at Ser2223. Lys2256 participates in a covalent cross-link: Glycyl lysine isopeptide (Lys-Gly) (interchain with G-Cter in SUMO2). A disordered region spans residues 2484-2581; sequence PHVDSSTMLH…NSDSSDDADD (98 aa). The span at 2492–2510 shows a compositional bias: basic residues; it reads LHHHHHHPHPHHHHHHHPG. Over residues 2513–2528 the composition is skewed to low complexity; that stretch reads TTGYPSSPATTTSGTA. Phosphoserine is present on Ser2519. The segment covering 2537–2550 has biased composition (acidic residues); the sequence is EDDDEEEDEDDDDL. Over residues 2565–2574 the composition is skewed to low complexity; the sequence is DDPMMPANSD.

Belongs to the SNF2/RAD54 helicase family. CHD8 subfamily. Interacts with p53/TP53, histone H1 and CTCF. Component of some MLL1/MLL complex, at least composed of the core components KMT2A/MLL1, ASH2L, HCFC1/HCF1, WDR5 and RBBP5, as well as the facultative components BACC1, CHD8, E2F6, HSP70, INO80C, KANSL1, LAS1L, MAX, MCRS1, MGA, KAT8/MOF, PELP1, PHF20, PRP31, RING2, RUVB1/TIP49A, RUVB2/TIP49B, SENP3, TAF1, TAF4, TAF6, TAF7, TAF9 and TEX10. Interacts with CHD7. Interacts with FAM124B. Interacts with CTNNB1. Interacts with PIAS3. Interacts with TLK2. Interacts with HNRNPL in an RNA-dependent manner. In terms of processing, sumoylated.

The protein localises to the nucleus. The catalysed reaction is ATP + H2O = ADP + phosphate + H(+). In terms of biological role, ATP-dependent chromatin-remodeling factor, it slides nucleosomes along DNA; nucleosome sliding requires ATP. Acts as a transcription repressor by remodeling chromatin structure and recruiting histone H1 to target genes. Suppresses p53/TP53-mediated apoptosis by recruiting histone H1 and preventing p53/TP53 transactivation activity. Acts as a negative regulator of Wnt signaling pathway by regulating beta-catenin (CTNNB1) activity. Negatively regulates CTNNB1-targeted gene expression by being recruited specifically to the promoter regions of several CTNNB1 responsive genes. Involved in both enhancer blocking and epigenetic remodeling at chromatin boundary via its interaction with CTCF. Acts as a suppressor of STAT3 activity by suppressing the LIF-induced STAT3 transcriptional activity. Also acts as a transcription activator via its interaction with ZNF143 by participating in efficient U6 RNA polymerase III transcription. Regulates alternative splicing of a core group of genes involved in neuronal differentiation, cell cycle and DNA repair. Enables H3K36me3-coupled transcription elongation and co-transcriptional RNA processing likely via interaction with HNRNPL. The polypeptide is Chromodomain-helicase-DNA-binding protein 8 (Rattus norvegicus (Rat)).